Reading from the N-terminus, the 446-residue chain is D-inositol 3-phosphate glycosyltransferase (446 aa).

Positions 1 to 21 are disordered; sequence MSHYVGRLGRRSPAGSGRLRL. Residue His34 participates in 1D-myo-inositol 3-phosphate binding. Residues 40-41 and Gly48 contribute to the UDP-N-acetyl-alpha-D-glucosamine site; that span reads QP. 1D-myo-inositol 3-phosphate contacts are provided by residues 45–50, Lys103, Tyr136, Thr160, and Arg180; that span reads DAGGMN. The UDP-N-acetyl-alpha-D-glucosamine site is built by Arg255, Lys260, and Val321. Positions 330, 331, and 333 each coordinate Mg(2+). UDP-N-acetyl-alpha-D-glucosamine is bound by residues Glu343 and Glu351. Thr357 is a Mg(2+) binding site.

The protein belongs to the glycosyltransferase group 1 family. MshA subfamily. In terms of assembly, homodimer.

It carries out the reaction 1D-myo-inositol 3-phosphate + UDP-N-acetyl-alpha-D-glucosamine = 1D-myo-inositol 2-acetamido-2-deoxy-alpha-D-glucopyranoside 3-phosphate + UDP + H(+). Catalyzes the transfer of a N-acetyl-glucosamine moiety to 1D-myo-inositol 3-phosphate to produce 1D-myo-inositol 2-acetamido-2-deoxy-glucopyranoside 3-phosphate in the mycothiol biosynthesis pathway. This is D-inositol 3-phosphate glycosyltransferase from Streptomyces scabiei (strain 87.22).